A 198-amino-acid chain; its full sequence is Angiopoietin-like protein 8 (198 aa).

The first 21 residues, 1–21 (MPVPALCLLWALAMVTRPASA), serve as a signal peptide directing secretion.

The protein belongs to the ANGPTL8 family. Interacts with ANGPTL3. In terms of processing, proteolytically cleaved at the N-terminus. In terms of tissue distribution, predominantly expressed in liver. Also expressed in adipose tissues.

It is found in the secreted. In terms of biological role, hormone that acts as a blood lipid regulator by regulating serum triglyceride levels. May be involved in the metabolic transition between fasting and refeeding: required to direct fatty acids to adipose tissue for storage in the fed state. The protein is Angiopoietin-like protein 8 of Homo sapiens (Human).